The following is a 320-amino-acid chain: Arabinan endo-1,5-alpha-L-arabinosidase C (320 aa).

The first 15 residues, 1-15 (MKLALSLFLLSGSLA), serve as a signal peptide directing secretion. Asp31 acts as the Proton acceptor in catalysis. N-linked (GlcNAc...) asparagine glycans are attached at residues Asn126 and Asn190. The active-site Proton donor is Glu198.

The protein belongs to the glycosyl hydrolase 43 family.

The protein localises to the secreted. The catalysed reaction is Endohydrolysis of (1-&gt;5)-alpha-arabinofuranosidic linkages in (1-&gt;5)-arabinans.. It functions in the pathway glycan metabolism; L-arabinan degradation. Endo-1,5-alpha-L-arabinanase involved in degradation of pectin. Its preferred substrate is linear 1,5-alpha-L-arabinan. In Emericella nidulans (strain FGSC A4 / ATCC 38163 / CBS 112.46 / NRRL 194 / M139) (Aspergillus nidulans), this protein is Arabinan endo-1,5-alpha-L-arabinosidase C (abnC).